A 232-amino-acid chain; its full sequence is Uracil phosphoribosyltransferase (232 aa).

Residue 38–42 participates in GTP binding; that stretch reads KGLVK. 5-phospho-alpha-D-ribose 1-diphosphate-binding positions include Arg-87, Arg-112, and 140–148; that span reads DPMIATGST. Residues Ile-204 and 209–211 contribute to the uracil site; that span reads GDA. Residue Asp-210 participates in 5-phospho-alpha-D-ribose 1-diphosphate binding.

Belongs to the UPRTase family. Mg(2+) is required as a cofactor.

It carries out the reaction UMP + diphosphate = 5-phospho-alpha-D-ribose 1-diphosphate + uracil. The protein operates within pyrimidine metabolism; UMP biosynthesis via salvage pathway; UMP from uracil: step 1/1. Allosterically activated by GTP. In terms of biological role, catalyzes the conversion of uracil and 5-phospho-alpha-D-ribose 1-diphosphate (PRPP) to UMP and diphosphate. This Pyrococcus furiosus (strain ATCC 43587 / DSM 3638 / JCM 8422 / Vc1) protein is Uracil phosphoribosyltransferase.